Reading from the N-terminus, the 110-residue chain is UPF0060 membrane protein ASA_2267 (110 aa).

4 consecutive transmembrane segments (helical) span residues 7 to 27 (IGLF…PYLW), 33 to 53 (SVWL…LLSL), 63 to 83 (AAYG…VDGI), and 87 to 107 (LWDL…MFAP).

This sequence belongs to the UPF0060 family.

The protein localises to the cell inner membrane. The protein is UPF0060 membrane protein ASA_2267 of Aeromonas salmonicida (strain A449).